We begin with the raw amino-acid sequence, 534 residues long: Cyclin-L1 (534 aa).

Cyclin-like regions lie at residues 94-196 (ELIQ…RVLK) and 209-293 (KIIV…KILQ). Positions 327–534 (LPEGAPVLDN…DHPGHSRHRR (208 aa)) are disordered. Residues 389-399 (KGRESRSRSGS) are compositionally biased toward basic and acidic residues. Low complexity-rich tracts occupy residues 400–412 (RDQS…SRSA) and 437–453 (RSGS…TYKS). Residues 400-436 (RDQSYSRSPSRSASPKHRKSESYSTSSGSKSHSRSRS) are RS. Residues 468–485 (SAHKARKSRSRSSSRSRS) show a composition bias toward basic residues. A compositionally biased stretch (basic and acidic residues) spans 486–495 (RSRERSDHSG). The span at 496–511 (KYKKKSHYYRNHRHER) shows a compositional bias: basic residues. Residues 512–528 (SRSYERASHRYDRDHPG) are compositionally biased toward basic and acidic residues.

Belongs to the cyclin family. Cyclin L subfamily.

It localises to the nucleus speckle. The protein resides in the nucleus. The protein localises to the nucleoplasm. Its function is as follows. Involved in pre-mRNA splicing. The polypeptide is Cyclin-L1 (CCNL1) (Gallus gallus (Chicken)).